The sequence spans 213 residues: Large ribosomal subunit protein uL1 (213 aa).

This sequence belongs to the universal ribosomal protein uL1 family. In terms of assembly, part of the 50S ribosomal subunit.

Binds directly to 23S rRNA. Probably involved in E site tRNA release. Its function is as follows. Protein L1 is also a translational repressor protein, it controls the translation of its operon by binding to its mRNA. In Nanoarchaeum equitans (strain Kin4-M), this protein is Large ribosomal subunit protein uL1.